A 646-amino-acid polypeptide reads, in one-letter code: DNA mismatch repair protein MutL (646 aa).

Disordered regions lie at residues 356–380 and 415–452; these read FENR…NENS and TKNS…AKPH. Residues 424-436 show a composition bias toward low complexity; it reads SEATSNEAASAEI.

Belongs to the DNA mismatch repair MutL/HexB family.

This protein is involved in the repair of mismatches in DNA. It is required for dam-dependent methyl-directed DNA mismatch repair. May act as a 'molecular matchmaker', a protein that promotes the formation of a stable complex between two or more DNA-binding proteins in an ATP-dependent manner without itself being part of a final effector complex. This chain is DNA mismatch repair protein MutL, found in Staphylococcus carnosus (strain TM300).